The sequence spans 251 residues: 3-deoxy-manno-octulosonate cytidylyltransferase (251 aa).

Belongs to the KdsB family.

It localises to the cytoplasm. The catalysed reaction is 3-deoxy-alpha-D-manno-oct-2-ulosonate + CTP = CMP-3-deoxy-beta-D-manno-octulosonate + diphosphate. The protein operates within nucleotide-sugar biosynthesis; CMP-3-deoxy-D-manno-octulosonate biosynthesis; CMP-3-deoxy-D-manno-octulosonate from 3-deoxy-D-manno-octulosonate and CTP: step 1/1. It functions in the pathway bacterial outer membrane biogenesis; lipopolysaccharide biosynthesis. Its function is as follows. Activates KDO (a required 8-carbon sugar) for incorporation into bacterial lipopolysaccharide in Gram-negative bacteria. In Brucella canis (strain ATCC 23365 / NCTC 10854 / RM-666), this protein is 3-deoxy-manno-octulosonate cytidylyltransferase.